A 173-amino-acid chain; its full sequence is Acireductone dioxygenase (173 aa).

A disordered region spans residues 1–20 (MKVYEYDNSTEDQREDHDSG). Positions 81, 83, 87, and 126 each coordinate Fe(2+). Positions 81, 83, 87, and 126 each coordinate Ni(2+).

This sequence belongs to the acireductone dioxygenase (ARD) family. It depends on Fe(2+) as a cofactor. The cofactor is Ni(2+).

The protein localises to the cytoplasm. It localises to the nucleus. It carries out the reaction 1,2-dihydroxy-5-(methylsulfanyl)pent-1-en-3-one + O2 = 4-methylsulfanyl-2-oxobutanoate + formate + 2 H(+). It catalyses the reaction 1,2-dihydroxy-5-(methylsulfanyl)pent-1-en-3-one + O2 = 3-(methylsulfanyl)propanoate + CO + formate + 2 H(+). It participates in amino-acid biosynthesis; L-methionine biosynthesis via salvage pathway; L-methionine from S-methyl-5-thio-alpha-D-ribose 1-phosphate: step 5/6. Its function is as follows. Catalyzes 2 different reactions between oxygen and the acireductone 1,2-dihydroxy-3-keto-5-methylthiopentene (DHK-MTPene) depending upon the metal bound in the active site. Fe-containing acireductone dioxygenase (Fe-ARD) produces formate and 2-keto-4-methylthiobutyrate (KMTB), the alpha-ketoacid precursor of methionine in the methionine recycle pathway. Ni-containing acireductone dioxygenase (Ni-ARD) produces methylthiopropionate, carbon monoxide and formate, and does not lie on the methionine recycle pathway. This chain is Acireductone dioxygenase, found in Tuber melanosporum (strain Mel28) (Perigord black truffle).